The sequence spans 274 residues: CDC48-associated ubiquitin-like/zinc finger protein 1 (274 aa).

An AN1-type zinc finger spans residues 12 to 58; the sequence is LDVGKHCAYCRQLDFLPFHCSFCNEDFCSNHRLKEDHHCRWLLEHEE. 8 residues coordinate Zn(2+): C18, C21, C31, C34, C39, H42, H48, and C50. The tract at residues 170–266 is ubiquitin-like; that stretch reads NRIYIWCYLV…KDLDTLYLVH (97 aa). Position 273 is a phosphoserine (S273).

As to quaternary structure, interacts (via its ubiquitin-like domain) with CDC48 (via N-terminus). Associates with the 26S proteasome. Specifically interacts with the regulatory particle (RP) subunit RPN2. Exposure to arsenite, a known inducer of protein misfolding resulting in accumulation of polyubiquitinated conjugates, enhances the association with the proteoasome. Binds to ubiquitinated proteins conjugated to a 4 or more molecule ubiquitin chain. Binding to ubiquitinated proteins is zinc-dependent.

It is found in the cytoplasm. The protein localises to the nucleus. Functionally, promotes efficient arsenite-induced clearance of stress granules (SGs). May have a role in the ubiquitin-proteasome system (UPS) protecting cells from metalloid-induced proteotoxicity. This is CDC48-associated ubiquitin-like/zinc finger protein 1 from Saccharomyces cerevisiae (strain ATCC 204508 / S288c) (Baker's yeast).